Consider the following 250-residue polypeptide: Probable 2' cyclic ADP-D-ribose synthase TcpB (250 aa).

The interval 1–46 (MSKEKQAQSKAHKAQQAISSAKSLSTQKSKMSELERATRDGAAIGK) is disordered. Residues 1–117 (MSKEKQAQSK…TASATMEAEE (117 aa)) are necessary and sufficient for phosphoinositide binding. The segment covering 14-23 (AQQAISSAKS) has biased composition (low complexity). The span at 30 to 39 (KMSELERATR) shows a compositional bias: basic and acidic residues. Residues 117 to 250 (EEYDFFISHA…EIAKELHSLI (134 aa)) enclose the TIR domain. Glu-192 is an active-site residue.

Homodimer; may also form oligomers. Interacts with host TIRAP. Interacts with host MYD88. Interaction with host MYD88 was not confirmed by another study. Interacts with host TLR4. Abolishes the interaction of host TIRAP with TLR4.

It is found in the secreted. It localises to the host cell membrane. It catalyses the reaction NAD(+) + H2O = ADP-D-ribose + nicotinamide + H(+). The catalysed reaction is NAD(+) = 2'cADPR + nicotinamide + H(+). Virulence factor that interferes with host Toll-like receptor 2 (TLR2) and TLR4 signaling, resulting in the reduction of dendritic cell maturation, inhibition of pro-inflammatory cytokine secretion and impaired NF-kappa-B activation in macrophages. Interferes with host TLR4 signaling by abolishing host TLR4-TIRAP interaction (but not host TIRAP-MYD88 interaction) and its downstream signaling. Inhibits host TLR 2 induced NF-kappa-B activation and TNF (tumor necrosis factor) secretion. Binds phosphoinositide (PtdIns) via its N-terminal domain. Has NAD(+) hydrolase (NADase) activity, catalyzes cleavage of NAD(+) into ADP-D-ribose (ADPR) and nicotinamide. Also generates a cyclization variant of cyclic ADPR (cADPR), termed v-cADPR (probably 2'cADPR). The protein is Probable 2' cyclic ADP-D-ribose synthase TcpB of Brucella melitensis biotype 1 (strain ATCC 23456 / CCUG 17765 / NCTC 10094 / 16M).